Reading from the N-terminus, the 245-residue chain is 1-(5-phosphoribosyl)-5-[(5-phosphoribosylamino)methylideneamino] imidazole-4-carboxamide isomerase (245 aa).

Aspartate 7 acts as the Proton acceptor in catalysis. The active-site Proton donor is aspartate 129.

Belongs to the HisA/HisF family.

The protein resides in the cytoplasm. The catalysed reaction is 1-(5-phospho-beta-D-ribosyl)-5-[(5-phospho-beta-D-ribosylamino)methylideneamino]imidazole-4-carboxamide = 5-[(5-phospho-1-deoxy-D-ribulos-1-ylimino)methylamino]-1-(5-phospho-beta-D-ribosyl)imidazole-4-carboxamide. The protein operates within amino-acid biosynthesis; L-histidine biosynthesis; L-histidine from 5-phospho-alpha-D-ribose 1-diphosphate: step 4/9. The sequence is that of 1-(5-phosphoribosyl)-5-[(5-phosphoribosylamino)methylideneamino] imidazole-4-carboxamide isomerase from Shigella flexneri serotype 5b (strain 8401).